The following is a 278-amino-acid chain: uncharacterized protein (278 aa).

This is an uncharacterized protein from Methanocaldococcus jannaschii (strain ATCC 43067 / DSM 2661 / JAL-1 / JCM 10045 / NBRC 100440) (Methanococcus jannaschii).